We begin with the raw amino-acid sequence, 192 residues long: Thioredoxin-like 3-2, chloroplastic (192 aa).

The transit peptide at 1 to 55 (MSEIVNLSSSLRSLNPKISPLVPPYRQTSSSFSRPRNFKYHSFTDKICLAAERIR) directs the protein to the chloroplast. The region spanning 66–191 (LQELDDSPVS…VREMIENDSI (126 aa)) is the Thioredoxin domain. Catalysis depends on nucleophile residues Cys110 and Cys113. A disulfide bridge connects residues Cys110 and Cys113.

It belongs to the thioredoxin family.

Its subcellular location is the plastid. The protein localises to the chloroplast stroma. In terms of biological role, probable thiol-disulfide oxidoreductase that may participate in various redox reactions. In Arabidopsis thaliana (Mouse-ear cress), this protein is Thioredoxin-like 3-2, chloroplastic (WCRKC2).